The sequence spans 991 residues: Translation initiation factor IF-2 (991 aa).

Disordered regions lie at residues 58-82 (EGKK…GRSR) and 106-405 (QARA…PAPQ). The span at 106–164 (QARADAAASDAAPAEPAPAAAEPSASAPVTAPVNAPAADAPQAPATAAPDTAAPAAETP) shows a compositional bias: low complexity. Pro residues predominate over residues 165–175 (SQPPAVEPQPA). Low complexity-rich tracts occupy residues 190 to 206 (AKPA…AAVE), 221 to 258 (AVQA…ASKP), and 267 to 276 (APVPVAAPAV). A compositionally biased stretch (basic and acidic residues) spans 279–289 (AGREEARRAAE). Residues 379–388 (RAGGKGGKGG) show a composition bias toward gly residues. Basic and acidic residues predominate over residues 395 to 405 (QAERRHEPAPQ). One can recognise a tr-type G domain in the interval 492 to 659 (PRAPVVTVMG…NVLLQAEILE (168 aa)). The G1 stretch occupies residues 501 to 508 (GHVDHGKT). Residue 501–508 (GHVDHGKT) coordinates GTP. Residues 526 to 530 (GITQH) form a G2 region. The interval 547 to 550 (DTPG) is G3. GTP-binding positions include 547–551 (DTPGH) and 601–604 (NKID). Residues 601 to 604 (NKID) are G4. Residues 637-639 (SAK) are G5.

This sequence belongs to the TRAFAC class translation factor GTPase superfamily. Classic translation factor GTPase family. IF-2 subfamily.

Its subcellular location is the cytoplasm. Its function is as follows. One of the essential components for the initiation of protein synthesis. Protects formylmethionyl-tRNA from spontaneous hydrolysis and promotes its binding to the 30S ribosomal subunits. Also involved in the hydrolysis of GTP during the formation of the 70S ribosomal complex. The protein is Translation initiation factor IF-2 of Bordetella petrii (strain ATCC BAA-461 / DSM 12804 / CCUG 43448).